Consider the following 240-residue polypeptide: Serine protease SplB (240 aa).

A signal peptide spans 1-36 (MNKNVVIKSLAALTILTSVTGIGTTLVEEVQQTAKA). Active-site charge relay system residues include His75, Asp113, and Ser193.

Belongs to the peptidase S1B family.

It localises to the secreted. In terms of biological role, serine protease that cleaves specifically after the sequence Trp-Glu-Leu-Gln. In Staphylococcus aureus (strain USA300), this protein is Serine protease SplB (splB).